A 332-amino-acid polypeptide reads, in one-letter code: D-galactose/methyl-galactoside binding periplasmic protein MglB (332 aa).

Positions 1–23 (MNKKVLTLSAVMASLLFGAHAHA) are cleaved as a signal peptide. Residues Asp37 and Asn114 each contribute to the beta-D-galactose site. Beta-D-glucose contacts are provided by Asp37 and Asn114. Residues Asp157, Asn159, Asp161, Lys163, and Gln165 each contribute to the Ca(2+) site. Beta-D-galactose is bound by residues His175, Asp177, and Arg181. Beta-D-glucose-binding residues include His175, Asp177, and Arg181. A Ca(2+)-binding site is contributed by Glu228. Positions 234, 259, and 279 each coordinate beta-D-galactose. 3 residues coordinate beta-D-glucose: Asn234, Asp259, and Asn279.

Belongs to the bacterial solute-binding protein 2 family. The ABC transporter complex is composed of one ATP-binding protein (MglA), two transmembrane proteins (MglC) and a solute-binding protein (MglB).

The protein resides in the periplasm. Functionally, part of the ABC transporter complex MglABC involved in galactose/methyl galactoside import. In addition, binds D-galactose and D-glucose and plays a role in the chemotaxis towards these two sugars by interacting with the Trg chemoreceptor. The chain is D-galactose/methyl-galactoside binding periplasmic protein MglB (mglB) from Salmonella typhimurium (strain LT2 / SGSC1412 / ATCC 700720).